We begin with the raw amino-acid sequence, 299 residues long: GTPase Era (299 aa).

In terms of domain architecture, Era-type G spans 4-171 (KSGFVAILGR…MEILKENLDE (168 aa)). Residues 12–19 (GRPNVGKS) are G1. 12-19 (GRPNVGKS) is a GTP binding site. The G2 stretch occupies residues 38–42 (QTTRN). A G3 region spans residues 59-62 (DTPG). GTP-binding positions include 59-63 (DTPGI) and 121-124 (NKID). A G4 region spans residues 121 to 124 (NKID). Positions 150 to 152 (ISA) are G5. A KH type-2 domain is found at 202-280 (TREEIPHSVA…FLETWVKVKK (79 aa)).

This sequence belongs to the TRAFAC class TrmE-Era-EngA-EngB-Septin-like GTPase superfamily. Era GTPase family. In terms of assembly, monomer.

Its subcellular location is the cytoplasm. The protein resides in the cell membrane. Its function is as follows. An essential GTPase that binds both GDP and GTP, with rapid nucleotide exchange. Plays a role in 16S rRNA processing and 30S ribosomal subunit biogenesis and possibly also in cell cycle regulation and energy metabolism. The chain is GTPase Era from Streptococcus suis (strain 98HAH33).